A 129-amino-acid polypeptide reads, in one-letter code: Small ribosomal subunit protein eS6 (129 aa).

Positions 106 to 129 are disordered; it reads QINASIVSRGEQSIDDLLGGEDDE.

Belongs to the eukaryotic ribosomal protein eS6 family.

This chain is Small ribosomal subunit protein eS6, found in Natronomonas pharaonis (strain ATCC 35678 / DSM 2160 / CIP 103997 / JCM 8858 / NBRC 14720 / NCIMB 2260 / Gabara) (Halobacterium pharaonis).